Consider the following 213-residue polypeptide: Uridine kinase (213 aa).

13–20 contributes to the ATP binding site; that stretch reads GASASGKS.

It belongs to the uridine kinase family.

The protein resides in the cytoplasm. The catalysed reaction is uridine + ATP = UMP + ADP + H(+). The enzyme catalyses cytidine + ATP = CMP + ADP + H(+). It participates in pyrimidine metabolism; CTP biosynthesis via salvage pathway; CTP from cytidine: step 1/3. The protein operates within pyrimidine metabolism; UMP biosynthesis via salvage pathway; UMP from uridine: step 1/1. This Haemophilus influenzae (strain PittGG) protein is Uridine kinase.